The chain runs to 374 residues: Chaperone protein DnaJ (374 aa).

A J domain is found at 5–70 (DYYEVLGVNR…RKRASYDQFG (66 aa)). Residues 133 to 210 (GLSRTIKVPT…CHGQGRQQQT (78 aa)) form a CR-type zinc finger. Positions 146, 149, 162, 165, 184, 187, 198, and 201 each coordinate Zn(2+). 4 CXXCXGXG motif repeats span residues 146–153 (CKTCNGSG), 162–169 (CPRCNGSG), 184–191 (CSVCRGRG), and 198–205 (CTDCHGQG).

This sequence belongs to the DnaJ family. In terms of assembly, homodimer. It depends on Zn(2+) as a cofactor.

Its subcellular location is the cytoplasm. Participates actively in the response to hyperosmotic and heat shock by preventing the aggregation of stress-denatured proteins and by disaggregating proteins, also in an autonomous, DnaK-independent fashion. Unfolded proteins bind initially to DnaJ; upon interaction with the DnaJ-bound protein, DnaK hydrolyzes its bound ATP, resulting in the formation of a stable complex. GrpE releases ADP from DnaK; ATP binding to DnaK triggers the release of the substrate protein, thus completing the reaction cycle. Several rounds of ATP-dependent interactions between DnaJ, DnaK and GrpE are required for fully efficient folding. Also involved, together with DnaK and GrpE, in the DNA replication of plasmids through activation of initiation proteins. This Coxiella burnetii (strain CbuG_Q212) (Coxiella burnetii (strain Q212)) protein is Chaperone protein DnaJ.